We begin with the raw amino-acid sequence, 316 residues long: 2-phospho-L-lactate guanylyltransferase (316 aa).

Residues 72-85 show a composition bias toward low complexity; it reads TGVSTEAVSTSTST. Disordered regions lie at residues 72 to 107 and 119 to 138; these read TGVS…PTHT and LRDD…DGDK. Positions 92 to 107 are enriched in polar residues; it reads HNAASDNYVSQSPTHT.

Belongs to the CofC family. Homodimer.

It catalyses the reaction (2S)-2-phospholactate + GTP + H(+) = (2S)-lactyl-2-diphospho-5'-guanosine + diphosphate. It functions in the pathway cofactor biosynthesis; coenzyme F420 biosynthesis. In terms of biological role, guanylyltransferase that catalyzes the activation of (2S)-2-phospholactate (2-PL) as (2S)-lactyl-2-diphospho-5'-guanosine, via the condensation of 2-PL with GTP. It is involved in the biosynthesis of coenzyme F420, a hydride carrier cofactor. The polypeptide is 2-phospho-L-lactate guanylyltransferase (Haloquadratum walsbyi (strain DSM 16790 / HBSQ001)).